A 479-amino-acid chain; its full sequence is Glutamyl-tRNA reductase (479 aa).

Residues 49–52 (TCNR), Ser109, 114–116 (EQQ), and Gln120 contribute to the substrate site. Cys50 acts as the Nucleophile in catalysis. 191–196 (GAGSMG) lines the NADP(+) pocket.

The protein belongs to the glutamyl-tRNA reductase family. As to quaternary structure, homodimer.

The catalysed reaction is (S)-4-amino-5-oxopentanoate + tRNA(Glu) + NADP(+) = L-glutamyl-tRNA(Glu) + NADPH + H(+). Its pathway is porphyrin-containing compound metabolism; protoporphyrin-IX biosynthesis; 5-aminolevulinate from L-glutamyl-tRNA(Glu): step 1/2. Its function is as follows. Catalyzes the NADPH-dependent reduction of glutamyl-tRNA(Glu) to glutamate 1-semialdehyde (GSA). The sequence is that of Glutamyl-tRNA reductase from Rhodococcus jostii (strain RHA1).